The sequence spans 134 residues: MICSPQNNTGVIMKKRNFSAEFKRESAQLVVDQNYTVADAASAMDVGLSTMTRWVKQLRDERQGKTPKASPITPEQIEIRELRKKLQRIEMENEILKKATVDSIGQRNSYVKTWGCGGFLNETNIYSRGKSLCF.

It belongs to the transposase 8 family.

Involved in the transposition of the insertion sequence IS911. This Escherichia coli (strain K12) protein is Putative transposase InsN for insertion sequence element IS911A (insN1).